We begin with the raw amino-acid sequence, 299 residues long: Bifunctional protein FolD (299 aa).

NADP(+)-binding positions include 168–170 (GRS), Ser-193, and Ile-234.

Belongs to the tetrahydrofolate dehydrogenase/cyclohydrolase family. As to quaternary structure, homodimer.

The enzyme catalyses (6R)-5,10-methylene-5,6,7,8-tetrahydrofolate + NADP(+) = (6R)-5,10-methenyltetrahydrofolate + NADPH. The catalysed reaction is (6R)-5,10-methenyltetrahydrofolate + H2O = (6R)-10-formyltetrahydrofolate + H(+). The protein operates within one-carbon metabolism; tetrahydrofolate interconversion. In terms of biological role, catalyzes the oxidation of 5,10-methylenetetrahydrofolate to 5,10-methenyltetrahydrofolate and then the hydrolysis of 5,10-methenyltetrahydrofolate to 10-formyltetrahydrofolate. In Bartonella quintana (strain Toulouse) (Rochalimaea quintana), this protein is Bifunctional protein FolD.